Reading from the N-terminus, the 698-residue chain is Probable Xaa-Pro aminopeptidase P (698 aa).

4 residues coordinate Mn(2+): aspartate 509, aspartate 520, glutamate 604, and glutamate 618.

Belongs to the peptidase M24B family. The cofactor is Mn(2+).

It carries out the reaction Release of any N-terminal amino acid, including proline, that is linked to proline, even from a dipeptide or tripeptide.. Its function is as follows. Catalyzes the removal of a penultimate prolyl residue from the N-termini of peptides. This is Probable Xaa-Pro aminopeptidase P (AMPP) from Arthroderma benhamiae (strain ATCC MYA-4681 / CBS 112371) (Trichophyton mentagrophytes).